The sequence spans 139 residues: Probable transcription termination protein NusA (139 aa).

The KH domain occupies 97 to 139; that stretch reads STVAYAEVDRADTGVAIGRDGETIETARRLAERQFDIDDIELA.

This sequence belongs to the NusA family.

The protein localises to the cytoplasm. Participates in transcription termination. In Halococcus morrhuae (Micrococcus morrhuae), this protein is Probable transcription termination protein NusA.